Here is a 469-residue protein sequence, read N- to C-terminus: Transcription factor phomD' (469 aa).

Residues 14–41 constitute a DNA-binding region (zn(2)-C6 fungal-type); that stretch reads CNACNESKVRCSQRKPTCARCERNGVEC. The disordered stretch occupies residues 49-118; that stretch reads THKDAPPISM…QQKDEAAAAA (70 aa). Over residues 82-93 the composition is skewed to polar residues; that stretch reads KANSNSSSNWHM. The segment covering 104-118 has biased composition (low complexity); that stretch reads QQQQQQQKDEAAAAA.

It is found in the nucleus. Functionally, transcription factor; part of the gene cluster that mediates the biosynthesis of the phomopsins, a group of hexapeptide mycotoxins which infects lupins and causes lupinosis disease in livestock. May play a role in the regulation of the production of phomopsins. The polypeptide is Transcription factor phomD' (Diaporthe leptostromiformis (Lupinosis disease fungus)).